The primary structure comprises 1126 residues: DNA-directed RNA polymerase subunit Rpo2 (1126 aa).

Zn(2+) is bound by residues Cys1060, Cys1063, Cys1078, and His1081.

It belongs to the RNA polymerase beta chain family. As to quaternary structure, part of the 13-subunit RNA polymerase complex. Interacts with TFS4. (Microbial infection) Binds viral protein RIP which blocks global transcription. The cofactor is Zn(2+).

The protein resides in the cytoplasm. The catalysed reaction is RNA(n) + a ribonucleoside 5'-triphosphate = RNA(n+1) + diphosphate. Its function is as follows. DNA-dependent RNA polymerase (RNAP) catalyzes the transcription of DNA into RNA using the four ribonucleoside triphosphates as substrates. This subunit is involved in DNA promoter recognition. The polypeptide is DNA-directed RNA polymerase subunit Rpo2 (Sulfolobus acidocaldarius (strain ATCC 33909 / DSM 639 / JCM 8929 / NBRC 15157 / NCIMB 11770)).